The sequence spans 446 residues: N-succinylarginine dihydrolase (446 aa).

Substrate contacts are provided by residues 19 to 28 (AGLSFGNVAS), Asn110, and 137 to 138 (HR). Glu174 is an active-site residue. Position 213 (Arg213) interacts with substrate. His249 is an active-site residue. The substrate site is built by Asp251 and Asn364. The Nucleophile role is filled by Cys370.

This sequence belongs to the succinylarginine dihydrolase family. Homodimer.

The enzyme catalyses N(2)-succinyl-L-arginine + 2 H2O + 2 H(+) = N(2)-succinyl-L-ornithine + 2 NH4(+) + CO2. Its pathway is amino-acid degradation; L-arginine degradation via AST pathway; L-glutamate and succinate from L-arginine: step 2/5. Its function is as follows. Catalyzes the hydrolysis of N(2)-succinylarginine into N(2)-succinylornithine, ammonia and CO(2). This Burkholderia multivorans (strain ATCC 17616 / 249) protein is N-succinylarginine dihydrolase.